A 98-amino-acid chain; its full sequence is C-C motif chemokine 19 (98 aa).

A signal peptide spans 1–21; that stretch reads MALLLALSLLVLWTSPAPTLS. Intrachain disulfides connect C29–C55 and C30–C71.

The protein belongs to the intercrine beta (chemokine CC) family. Interacts with TNFAIP6 (via Link domain). As to expression, expressed at high levels in the lymph nodes, thymus and appendix. Intermediate levels seen in colon and trachea, while low levels found in spleen, small intestine, lung, kidney and stomach.

The protein localises to the secreted. May play a role not only in inflammatory and immunological responses but also in normal lymphocyte recirculation and homing. May play an important role in trafficking of T-cells in thymus, and T-cell and B-cell migration to secondary lymphoid organs. Binds to chemokine receptor CCR7. Recombinant CCL19 shows potent chemotactic activity for T-cells and B-cells but not for granulocytes and monocytes. Binds to atypical chemokine receptor ACKR4 and mediates the recruitment of beta-arrestin (ARRB1/2) to ACKR4. This Homo sapiens (Human) protein is C-C motif chemokine 19 (CCL19).